We begin with the raw amino-acid sequence, 280 residues long: NAD-capped RNA hydrolase NudC (280 aa).

R83 provides a ligand contact to substrate. Zn(2+) contacts are provided by C113, C116, C131, and C134. Y139 is a binding site for substrate. One can recognise a Nudix hydrolase domain in the interval 140 to 268 (PRVAPAIIVL…ASRRLLDDAL (129 aa)). Residues A177, E193, and E197 each contribute to the a divalent metal cation site. A Nudix box motif is present at residues 178–199 (GFVEPSETLEAAVHREVGEEVG). Residue 211-218 (QPWPFPHS) coordinates substrate. E238 lines the a divalent metal cation pocket.

Belongs to the Nudix hydrolase family. NudC subfamily. As to quaternary structure, homodimer. The cofactor is Mg(2+). Mn(2+) is required as a cofactor. Requires Zn(2+) as cofactor.

The enzyme catalyses a 5'-end NAD(+)-phospho-ribonucleoside in mRNA + H2O = a 5'-end phospho-adenosine-phospho-ribonucleoside in mRNA + beta-nicotinamide D-ribonucleotide + 2 H(+). The catalysed reaction is NAD(+) + H2O = beta-nicotinamide D-ribonucleotide + AMP + 2 H(+). It carries out the reaction NADH + H2O = reduced beta-nicotinamide D-ribonucleotide + AMP + 2 H(+). MRNA decapping enzyme that specifically removes the nicotinamide adenine dinucleotide (NAD) cap from a subset of mRNAs by hydrolyzing the diphosphate linkage to produce nicotinamide mononucleotide (NMN) and 5' monophosphate mRNA. The NAD-cap is present at the 5'-end of some mRNAs and stabilizes RNA against 5'-processing. Has preference for mRNAs with a 5'-end purine. Catalyzes the hydrolysis of a broad range of dinucleotide pyrophosphates. This chain is NAD-capped RNA hydrolase NudC, found in Deinococcus radiodurans (strain ATCC 13939 / DSM 20539 / JCM 16871 / CCUG 27074 / LMG 4051 / NBRC 15346 / NCIMB 9279 / VKM B-1422 / R1).